The chain runs to 650 residues: MSQYIAELCTLLVEDNFGELFGHIFATLIRYDRLTLPRLRLYSKLPDAQLRRGLAAMVQQHLVYHYTSYEEGVTYYEPNLQSAYYLIRAGKILEFIEERLGKYAATVMSTIMFLGHAQVSYLETLPELQPQAPTAVNGNHEQPEKEIEGEGVEGEGIEEEGHTNGVNGEEALEEQEEQAQPFLLHPTLKALAAHGYIHRVREAHFQSYADNVLDCERTIKARADIKQMKGKKLEETVLELTAEMLRERLDGDLTHGLVFNGVPRGAKRRRGPGGAERSNKKARVDYVAVDEDEEEEEENEWSEDEMGGDNIPMESGITVRVNYEKLDVALRNRRFLELAEQDCSAATIHVYECLLRRIEYKTKQCRDTPEIPREGEEGKQFAAPISLAAIAEDVDPSVDLAGSIGPMDPSQAVNRRGKRPLDDGVNGTHHDGPNGASSDGNRIYDVGQHLALLSEPPHNLTEKKVVANLPSWTVEFRSLACKLRHLELERMIEARYGDVALRVVRVLHAKGKLDEKRLQEISLLPFRVLRQVLASMQAGGFVDLQEVPRDAQRQPSRTIYLWFYDPDRTRASILEDTYKSMSRCLQRLRFERNRLKEFLEKTERSDVKGNEERYLSEAELTLLEQWRAKEALLLGEVARLDEMVAVMRDY.

Disordered stretches follow at residues 133–163, 264–283, 288–313, and 400–440; these read PTAVNGNHEQPEKEIEGEGVEGEGIEEEGHT, RGAKRRRGPGGAERSNKKAR, AVDEDEEEEEENEWSEDEMGGDNIPM, and LAGS…SSDG. Over residues 149-158 the composition is skewed to acidic residues; it reads GEGVEGEGIE. A compositionally biased stretch (acidic residues) spans 288-307; it reads AVDEDEEEEEENEWSEDEMG. The tract at residues 577–598 is leucine-zipper; sequence TYKSMSRCLQRLRFERNRLKEF.

Belongs to the RNA polymerase beta chain family. In terms of assembly, component of the RNA polymerase III (Pol III) complex consisting of 17 subunits.

It is found in the nucleus. Functionally, DNA-dependent RNA polymerase catalyzes the transcription of DNA into RNA using the four ribonucleoside triphosphates as substrates. Specific core component of RNA polymerase III which synthesizes small RNAs, such as 5S rRNA and tRNAs. The protein is DNA-directed RNA polymerase III subunit rpc3 (rpc82) of Aspergillus terreus (strain NIH 2624 / FGSC A1156).